We begin with the raw amino-acid sequence, 593 residues long: Aspartate--tRNA(Asp/Asn) ligase (593 aa).

Glutamate 173 provides a ligand contact to L-aspartate. Residues 197–200 (QLFK) are aspartate. Arginine 219 is an L-aspartate binding site. ATP contacts are provided by residues 219–221 (RDE) and glutamine 228. Histidine 451 is a binding site for L-aspartate. Glutamate 485 contributes to the ATP binding site. L-aspartate is bound at residue arginine 492. 537 to 540 (GIDR) contacts ATP.

Belongs to the class-II aminoacyl-tRNA synthetase family. Type 1 subfamily. Homodimer.

It localises to the cytoplasm. The enzyme catalyses tRNA(Asx) + L-aspartate + ATP = L-aspartyl-tRNA(Asx) + AMP + diphosphate. Its function is as follows. Aspartyl-tRNA synthetase with relaxed tRNA specificity since it is able to aspartylate not only its cognate tRNA(Asp) but also tRNA(Asn). Reaction proceeds in two steps: L-aspartate is first activated by ATP to form Asp-AMP and then transferred to the acceptor end of tRNA(Asp/Asn). The protein is Aspartate--tRNA(Asp/Asn) ligase of Legionella pneumophila (strain Paris).